A 1884-amino-acid polypeptide reads, in one-letter code: Fatty acid synthase subunit alpha (1884 aa).

Residues 91-141 (TPDPAEPPAAEEPKAETGKESAPAASAAAAAATQPAAAVAPPPQSAGPVES) are disordered. Residues 111–129 (SAPAASAAAAAATQPAAAV) show a composition bias toward low complexity. The Carrier domain occupies 147-222 (VKASLLIHVL…EQFQDTFSGS (76 aa)). S182 carries the O-(pantetheine 4'-phosphoryl)serine modification. Positions 583–613 (TEQTTQDALAIPTGSNTPTEEDELSTASDDD) are disordered. The segment covering 584–600 (EQTTQDALAIPTGSNTP) has biased composition (polar residues). The segment covering 601-613 (TEEDELSTASDDD) has biased composition (acidic residues). The interval 677–873 (DKYVLVTGAG…CGAIIGWTRG (197 aa)) is beta-ketoacyl reductase. Residues 1120-1660 (IQEVVIQHDL…QKGAQAVVVH (541 aa)) form the Ketosynthase family 3 (KS3) domain. Active-site for beta-ketoacyl synthase activity residues include C1303, H1545, and H1586. 3 residues coordinate Mg(2+): D1770, V1771, and E1772. Residues 1770 to 1772 (DVE), Y1796, S1806, 1815 to 1825 (EATFKALGVSS), 1839 to 1842 (RDGN), and 1869 to 1871 (ISH) each bind acetyl-CoA. 2 residues coordinate Mg(2+): S1870 and H1871.

Belongs to the thiolase-like superfamily. Fungal fatty acid synthetase subunit alpha family. In terms of assembly, fatty acid synthase is composed of alpha and beta subunits.

It catalyses the reaction acetyl-CoA + n malonyl-CoA + 2n NADPH + 4n H(+) = a long-chain-acyl-CoA + n CoA + n CO2 + 2n NADP(+).. It carries out the reaction a fatty acyl-[ACP] + malonyl-[ACP] + H(+) = a 3-oxoacyl-[ACP] + holo-[ACP] + CO2. The enzyme catalyses a (3R)-hydroxyacyl-[ACP] + NADP(+) = a 3-oxoacyl-[ACP] + NADPH + H(+). Functionally, fatty acid synthetase catalyzes the formation of long-chain fatty acids from acetyl-CoA, malonyl-CoA and NADPH. The alpha subunit contains domains for: acyl carrier protein, 3-oxoacyl-[acyl-carrier-protein] reductase, and 3-oxoacyl-[acyl-carrier-protein] synthase. This is Fatty acid synthase subunit alpha (FAS2) from Candida parapsilosis (strain CDC 317 / ATCC MYA-4646) (Yeast).